The chain runs to 305 residues: Insulin-like peptide (305 aa).

Positions 1–22 (MNLSSVYVLASLAVVCLLVKET) are cleaved as a signal peptide. Disulfide bonds link cysteine 28/cysteine 87, cysteine 40/cysteine 100, and cysteine 86/cysteine 91. Positions 52–76 (SVSKRAIDFISEQQAKDYMGAMPHI) are cleaved as a propeptide — connecting peptide. Positions 102–114 (PYSTAPATATPVR) are d. The propeptide at 102–305 (PYSTAPATAT…RDSYHLTELR (204 aa)) is d/E peptide. Over residues 107-118 (PATATPVRTTEP) the composition is skewed to low complexity. Disordered stretches follow at residues 107-130 (PATA…PLDG) and 236-305 (HNQT…TELR). The tract at residues 115-305 (TTEPQPEEAE…RDSYHLTELR (191 aa)) is e. The span at 119 to 128 (QPEEAEDDPL) shows a compositional bias: acidic residues. 2 stretches are compositionally biased toward basic and acidic residues: residues 236 to 245 (HNQTDKKEPT) and 291 to 305 (RRIE…TELR).

It belongs to the insulin family.

The protein localises to the secreted. This Branchiostoma californiense (California lancelet) protein is Insulin-like peptide (ILP).